The chain runs to 229 residues: Trehalose-6-phosphate phosphatase-related protein (229 aa).

Asp-5 functions as the Nucleophile in the catalytic mechanism. Asp-5, Asp-7, and Asp-177 together coordinate Mg(2+). Asp-5 to Asp-7 contributes to the substrate binding site.

It belongs to the trehalose phosphatase family. Requires Mg(2+) as cofactor.

The enzyme catalyses alpha,alpha-trehalose 6-phosphate + H2O = alpha,alpha-trehalose + phosphate. The protein operates within glycan biosynthesis; trehalose biosynthesis. In terms of biological role, removes the phosphate from trehalose 6-phosphate (Tre6P) to produce free trehalose. Also catalyzes the dephosphorylation of para-nitrophenyl phosphate (pNPP), but with lesser efficiency (in vitro). The sequence is that of Trehalose-6-phosphate phosphatase-related protein from Thermoplasma acidophilum (strain ATCC 25905 / DSM 1728 / JCM 9062 / NBRC 15155 / AMRC-C165).